The following is a 348-amino-acid chain: Phosphoribosylformylglycinamidine cyclo-ligase (348 aa).

The protein belongs to the AIR synthase family.

It localises to the cytoplasm. It carries out the reaction 2-formamido-N(1)-(5-O-phospho-beta-D-ribosyl)acetamidine + ATP = 5-amino-1-(5-phospho-beta-D-ribosyl)imidazole + ADP + phosphate + H(+). It functions in the pathway purine metabolism; IMP biosynthesis via de novo pathway; 5-amino-1-(5-phospho-D-ribosyl)imidazole from N(2)-formyl-N(1)-(5-phospho-D-ribosyl)glycinamide: step 2/2. In Cereibacter sphaeroides (strain KD131 / KCTC 12085) (Rhodobacter sphaeroides), this protein is Phosphoribosylformylglycinamidine cyclo-ligase.